An 86-amino-acid polypeptide reads, in one-letter code: U15-lycotoxin-Ls1d (86 aa).

The signal sequence occupies residues 1 to 20; sequence MNSKIFAVLLLLALLSCVLS. The WAP domain maps to 21–66; that stretch reads DQYCPKSSITACKKMNIRNDCCKDDDCTGGSWCCATPCGNFCKYPT. Intrachain disulfides connect C24–C54, C32–C58, C41–C53, C42–C80, and C47–C62.

This sequence belongs to the venom protein 11 family. 01 (wap-1) subfamily. Contains 5 disulfide bonds. Expressed by the venom gland.

The protein resides in the secreted. Its function is as follows. Has antibacterial activity. The protein is U15-lycotoxin-Ls1d of Lycosa singoriensis (Wolf spider).